We begin with the raw amino-acid sequence, 126 residues long: Large ribosomal subunit protein bL12 (126 aa).

This sequence belongs to the bacterial ribosomal protein bL12 family. As to quaternary structure, homodimer. Part of the ribosomal stalk of the 50S ribosomal subunit. Forms a multimeric L10(L12)X complex, where L10 forms an elongated spine to which 2 to 4 L12 dimers bind in a sequential fashion. Binds GTP-bound translation factors.

Functionally, forms part of the ribosomal stalk which helps the ribosome interact with GTP-bound translation factors. Is thus essential for accurate translation. In Geobacter sp. (strain M21), this protein is Large ribosomal subunit protein bL12.